A 341-amino-acid chain; its full sequence is Beta-ketoacyl-[acyl-carrier-protein] synthase III 1 (341 aa).

Residues C113 and H249 contribute to the active site. Positions 250–254 are ACP-binding; the sequence is QANIR. The active site involves N279.

The protein belongs to the thiolase-like superfamily. FabH family. In terms of assembly, homodimer.

The protein localises to the cytoplasm. The catalysed reaction is malonyl-[ACP] + acetyl-CoA + H(+) = 3-oxobutanoyl-[ACP] + CO2 + CoA. Its pathway is lipid metabolism; fatty acid biosynthesis. Functionally, catalyzes the condensation reaction of fatty acid synthesis by the addition to an acyl acceptor of two carbons from malonyl-ACP. Catalyzes the first condensation reaction which initiates fatty acid synthesis and may therefore play a role in governing the total rate of fatty acid production. Possesses both acetoacetyl-ACP synthase and acetyl transacylase activities. Its substrate specificity determines the biosynthesis of branched-chain and/or straight-chain of fatty acids. The protein is Beta-ketoacyl-[acyl-carrier-protein] synthase III 1 of Deinococcus radiodurans (strain ATCC 13939 / DSM 20539 / JCM 16871 / CCUG 27074 / LMG 4051 / NBRC 15346 / NCIMB 9279 / VKM B-1422 / R1).